The following is a 200-amino-acid chain: ATP synthase subunit s, mitochondrial (200 aa).

The transit peptide at 1 to 25 directs the protein to the mitochondrion; sequence MMLFGKISQQLCGVKKLPWSCDSRY. The tract at residues 1 to 61 is N-terminal domain; the sequence is MMLFGKISQQ…SEWLLRCGAM (61 aa). Mg(2+) is bound at residue Gly-59. LRR repeat units follow at residues 62 to 87, 88 to 116, 117 to 141, and 142 to 173; these read VRYH…KYKI, QAID…KIRL, CKCH…KTIL, and EMEI…LSDL. Residue Thr-93 coordinates Mg(2+).

Belongs to the ATP synthase subunit s family. As to quaternary structure, homotetramer. Associates with ATP synthase.

The protein resides in the mitochondrion. It localises to the mitochondrion inner membrane. Functionally, involved in regulation of mitochondrial membrane ATP synthase. Necessary for H(+) conduction of ATP synthase. Facilitates energy-driven catalysis of ATP synthesis by blocking a proton leak through an alternative proton exit pathway. The polypeptide is ATP synthase subunit s, mitochondrial (DMAC2L) (Pongo abelii (Sumatran orangutan)).